A 412-amino-acid chain; its full sequence is Adenosine receptor A2a (412 aa).

At 1–7 (MSTMGSW) the chain is on the extracellular side. A helical transmembrane segment spans residues 8 to 32 (VYITVELAIAVLAILGNVLVCWAVW). Over 33-42 (LNSNLQNVTN) the chain is Cytoplasmic. A helical transmembrane segment spans residues 43–66 (YFVVSLAAADIAVGVLAIPFAITI). Over 67-77 (STGFCAACHNC) the chain is Extracellular. 3 disulfides stabilise this stretch: Cys71-Cys159, Cys74-Cys146, and Cys77-Cys166. The chain crosses the membrane as a helical span at residues 78–100 (LFFACFVLVLTQSSIFSLLAIAI). Topologically, residues 101–120 (DRYIAIRIPLRYNGLVTGTR) are cytoplasmic. The helical transmembrane segment at 121 to 143 (AKGIIAVCWVLSFAIGLTPMLGW) threads the bilayer. At 144–173 (NNCSQPKEGRNYSQGCGEGQVACLFEDVVP) the chain is on the extracellular side. N-linked (GlcNAc...) asparagine glycosylation is found at Asn145 and Asn154. Glu169 provides a ligand contact to adenosine. The chain crosses the membrane as a helical span at residues 174 to 198 (MNYMVYYNFFAFVLVPLLLMLGVYL). Residues 199 to 234 (RIFLAARRQLKQMESQPLPGERARSTLQKEVHAAKS) are Cytoplasmic-facing. The chain crosses the membrane as a helical span at residues 235–258 (LAIIVGLFALCWLPLHIINCFTFF). Position 253 (Asn253) interacts with adenosine. Cys259 and Cys262 are joined by a disulfide. Residues 259–266 (CPECSHAP) are Extracellular-facing. A helical transmembrane segment spans residues 267–290 (LWLMYLTIVLSHTNSVVNPFIYAY). Adenosine is bound by residues Ser277 and His278. The Cytoplasmic portion of the chain corresponds to 291-412 (RIREFRQTFR…PLAQDGAGVS (122 aa)). The segment at 392-412 (GACPESPGLEGPLAQDGAGVS) is disordered.

Belongs to the G-protein coupled receptor 1 family. Interacts (via cytoplasmic C-terminal domain) with USP4; the interaction is direct. May interact with DRD4. Interacts with NECAB2. Interacts (via cytoplasmic C-terminal domain) with GAS2L2; interaction enhances receptor-mediated adenylyl cyclase activity. Ubiquitinated. Deubiquitinated by USP4; leading to stabilization and expression at the cell surface.

Its subcellular location is the cell membrane. Its function is as follows. Receptor for adenosine. The activity of this receptor is mediated by G proteins which activate adenylyl cyclase. The protein is Adenosine receptor A2a (ADORA2A) of Canis lupus familiaris (Dog).